Consider the following 405-residue polypeptide: Tryptophan synthase beta chain (405 aa).

Position 98 is an N6-(pyridoxal phosphate)lysine (Lys98).

The protein belongs to the TrpB family. Tetramer of two alpha and two beta chains. It depends on pyridoxal 5'-phosphate as a cofactor.

It catalyses the reaction (1S,2R)-1-C-(indol-3-yl)glycerol 3-phosphate + L-serine = D-glyceraldehyde 3-phosphate + L-tryptophan + H2O. It functions in the pathway amino-acid biosynthesis; L-tryptophan biosynthesis; L-tryptophan from chorismate: step 5/5. Functionally, the beta subunit is responsible for the synthesis of L-tryptophan from indole and L-serine. The protein is Tryptophan synthase beta chain of Xylella fastidiosa (strain M23).